The following is a 600-amino-acid chain: Polypeptide N-acetylgalactosaminyltransferase (600 aa).

Over 1–7 (MVRRKLR) the chain is Cytoplasmic. A helical; Signal-anchor for type II membrane protein transmembrane segment spans residues 8 to 28 (LLVILAGIWLVGIVVYLFKGD). Topologically, residues 29-600 (DQSEFEKRVI…KWTFSLSKNR (572 aa)) are lumenal. Intrachain disulfides connect Cys154–Cys382, Cys373–Cys451, Cys484–Cys501, Cys524–Cys541, and Cys567–Cys583. Positions 163–268 (LPDTSVIITF…EKWLEPLLDR (106 aa)) are catalytic subdomain A. Substrate contacts are provided by Thr171, Asp204, and Arg229. Residue Asp252 participates in Mn(2+) binding. Ser253 contacts substrate. A Mn(2+)-binding site is contributed by His254. Positions 328–390 (PIRTPMIAGG…PCSRVGHVFR (63 aa)) are catalytic subdomain B. Trp359 is a substrate binding site. His387 serves as a coordination point for Mn(2+). Positions 390, 393, and 395 each coordinate substrate. Positions 466–595 (KIPSVQDIAF…SSYTQKWTFS (130 aa)) constitute a Ricin B-type lectin domain.

Belongs to the glycosyltransferase 2 family. GalNAc-T subfamily. It depends on Mn(2+) as a cofactor. Post-translationally, O-glycosylated.

Its subcellular location is the golgi apparatus membrane. The catalysed reaction is L-seryl-[protein] + UDP-N-acetyl-alpha-D-galactosamine = a 3-O-[N-acetyl-alpha-D-galactosaminyl]-L-seryl-[protein] + UDP + H(+). It carries out the reaction L-threonyl-[protein] + UDP-N-acetyl-alpha-D-galactosamine = a 3-O-[N-acetyl-alpha-D-galactosaminyl]-L-threonyl-[protein] + UDP + H(+). It participates in protein modification; protein glycosylation. No change in activity by addition of up to 10% methanol or glycerol, or 5% acetonitrile. 40% reduction in activity by 10% acetonitrile or by lyophilization. Activity requires divalent cations, the best being Mn(2+) (10-20 mM), followed by Co(2+), Mg(2+) and Ca(2+). Loss of activity with Cu(2+) or in the presence of EDTA. Inhibited by UDP, but not by UMP, UTP, ADP or GDP nucleotides. No inhibition by galactose, N-acetylglucosamine or N-acetylgalactosamine sugars. Its function is as follows. Catalyzes the initial reaction in O-linked oligosaccharide biosynthesis, the transfer of an N-acetyl-D-galactosamine residue to a serine or threonine residue on the protein receptor. Has a broad substrate specificity. Acceptor peptides include Muc2, Muc5Ac, Muc1a and Muc1a', with Muc2 as the best acceptor. Acts on non-glycosylated and mono- or multi-glycosylated peptide substrates. Transfers preferably to threonine rather than serine residue. Thr-15 is the most preferred site of glycosylation in Muc2 peptide PTTTPITTTTTVTPTPTPTGTQTK having proline residues at position -1, and at positions +1 and +3, where the number represents the distance from the C-terminal and N-terminal hydroxyl amino acid, respectively. Transfer of the N-acetyl-D-galactosamine (GalNAc) is optimal with proline residues at positions -3, -1, +1 and +3, but other amino acids are tolerated, although some, such as phenylalanine, isoleucine or leucine at -1, or lysine at +3 prevent the transfer completely. Second GalNAc is transferred to Muc2 Thr-2 or Thr-13, both of which have two proline residues nearby. Up to nine sites can be glycosylated within Muc2, but eight are used simultaneously since Thr-19 and Thr-21 are not detected to be glycosylated at the same time. Glycosylation is not detected of a potential site, which is next to an already glycosylated site, but only one amino acid is needed in between two glycosylation sites. Ser-5 is the preferred glycosylation site in Muc5Ac peptide GTTPSPVPTTSTTSAP into which up to four GalNAcs can be attached. Only the threonine residues are detected as pontential glycosylation sites in Muc1a APPAHGVTSAPDTRPAPGC and Muc1a' AHGVTSAPDTR peptides. Transferase activity is restricted to UDP-GalNAc as a donor, and none of the nucleotide sugars UDP-Gal, UDP-GlcNAc, GDP-fucose, UDP-xylose, UDP-glucuronic acid or CMP-neuraminic acid are utilized as donors. The protein is Polypeptide N-acetylgalactosaminyltransferase of Biomphalaria glabrata (Bloodfluke planorb).